The primary structure comprises 221 residues: Immunoregulatory peptides (221 aa).

Residues 1 to 19 form the signal peptide; sequence MNYLCLVVTLVAVAGAISG. The propeptide occupies 20–45; it reads EKFSDDNTGYQSTPSLRIRTTPGRRR. Positions 21 to 155 are disordered; the sequence is KFSDDNTGYQ…PRTIGPPYTR (135 aa). Residues 25 to 34 show a composition bias toward polar residues; that stretch reads DNTGYQSTPS. Residues 48 to 69 show a composition bias toward low complexity; the sequence is PRTIGPPYTRRTLRTTTDYSTT. Polar residues-rich tracts occupy residues 70 to 85 and 123 to 133; these read VENG…STEK and NGTTPAANSTE. Positions 191–221 are excised as a propeptide; it reads EISWTFGPLYTWRTTKGYGTTLETTNATSTS.

Salivary glands.

Its subcellular location is the secreted. Functionally, suppress host inflammatory response. Exerts significant anti-inflammatory functions, either by directly inhibiting host secretion of inflammatory factors such as tumor necrosis factor-alpha (TNF), monocyte chemotactic protein-1 (CCL2), and interferon-gamma (IFNG) or by indirectly increasing the secretion of immunosuppressant cytokine of interleukin-10 (IL10). Also potently scavenges free radical in vitro in a rapid manner. All tested concentrations of this peptide have little effect on the cell viability. In vivo, inhibits hind paw adjuvant-induced inflammation in mouse in a dose-dependent manner. Its function is as follows. Suppress host inflammatory response. Exerts significant anti-inflammatory functions, either by directly inhibiting host secretion of inflammatory factors such as tumor necrosis factor-alpha (TNF), monocyte chemotactic protein-1 (CCL2), and interferon-gamma (IFNG) or by indirectly increasing the secretion of immunosuppressant cytokine of interleukin-10 (IL10). Also potently scavenges free radical in vitro in a rapid manner. Low concentrations of this peptide have little effect on the cell viability, whereas high concentrations increase the cell viability by 10-20%. In vivo, inhibits hind paw adjuvant-induced inflammation in mouse in a dose-dependent manner. In terms of biological role, not studied but probably similar to Hyalomin-B1. This chain is Immunoregulatory peptides, found in Hyalomma asiaticum asiaticum (Tick).